Reading from the N-terminus, the 704-residue chain is Elongation factor G (704 aa).

In terms of domain architecture, tr-type G spans 10 to 290; sequence NKVRNIGIMA…AVIDYLPSPL (281 aa). GTP-binding positions include 19–26, 83–87, and 137–140; these read AHIDAGKT, DTPGH, and NKMD.

This sequence belongs to the TRAFAC class translation factor GTPase superfamily. Classic translation factor GTPase family. EF-G/EF-2 subfamily.

The protein localises to the cytoplasm. Functionally, catalyzes the GTP-dependent ribosomal translocation step during translation elongation. During this step, the ribosome changes from the pre-translocational (PRE) to the post-translocational (POST) state as the newly formed A-site-bound peptidyl-tRNA and P-site-bound deacylated tRNA move to the P and E sites, respectively. Catalyzes the coordinated movement of the two tRNA molecules, the mRNA and conformational changes in the ribosome. The polypeptide is Elongation factor G (Clavibacter sepedonicus (Clavibacter michiganensis subsp. sepedonicus)).